Consider the following 312-residue polypeptide: MRLVFAGTPETALPALHQLIDSPRHDVIAVLTRPDAASGRRGKPEPSPVARAALERDIPVLRPSRPNSAEFVAELSELAPQCCAVVAYGALLGDALLGVPPQGWVNLHFSLLPAWRGAAPVQAAIAAGDAVTGATTFQIEPSLDSGPVYGVVTETIRPTDTAGDLLGRLAVSGAELLSATLDGIAEGALTARPQPADGVTLAPKISVEQARVRWELPAPIIERRIRAVTPNPGAWTLIGDLRVKLGPVYLDAAVKPPGPLPPGAIQVDRKHVWVGTGSEPLRLGQVQPPGKKLMNAADWARGARLDPSVRAS.

A (6S)-5,6,7,8-tetrahydrofolate-binding site is contributed by 110–113 (SLLP).

Belongs to the Fmt family.

It carries out the reaction L-methionyl-tRNA(fMet) + (6R)-10-formyltetrahydrofolate = N-formyl-L-methionyl-tRNA(fMet) + (6S)-5,6,7,8-tetrahydrofolate + H(+). In terms of biological role, attaches a formyl group to the free amino group of methionyl-tRNA(fMet). The formyl group appears to play a dual role in the initiator identity of N-formylmethionyl-tRNA by promoting its recognition by IF2 and preventing the misappropriation of this tRNA by the elongation apparatus. The sequence is that of Methionyl-tRNA formyltransferase from Mycobacterium marinum (strain ATCC BAA-535 / M).